Reading from the N-terminus, the 279-residue chain is Thymidylate synthase 1 (279 aa).

141–142 (RR) contributes to the dUMP binding site. The active-site Nucleophile is C161. Residues 181-184 (RSND), N192, and 222-224 (HVY) each bind dUMP. D184 lines the (6R)-5,10-methylene-5,6,7,8-tetrahydrofolate pocket. A278 is a (6R)-5,10-methylene-5,6,7,8-tetrahydrofolate binding site.

Belongs to the thymidylate synthase family. Bacterial-type ThyA subfamily. In terms of assembly, homodimer.

It localises to the cytoplasm. The catalysed reaction is dUMP + (6R)-5,10-methylene-5,6,7,8-tetrahydrofolate = 7,8-dihydrofolate + dTMP. The protein operates within pyrimidine metabolism; dTTP biosynthesis. In terms of biological role, catalyzes the reductive methylation of 2'-deoxyuridine-5'-monophosphate (dUMP) to 2'-deoxythymidine-5'-monophosphate (dTMP) while utilizing 5,10-methylenetetrahydrofolate (mTHF) as the methyl donor and reductant in the reaction, yielding dihydrofolate (DHF) as a by-product. This enzymatic reaction provides an intracellular de novo source of dTMP, an essential precursor for DNA biosynthesis. The polypeptide is Thymidylate synthase 1 (Bacillus subtilis (strain 168)).